An 87-amino-acid chain; its full sequence is uncharacterized protein (87 aa).

The segment at 52–87 is disordered; the sequence is KWQPRPDANNSDTTTSTEDSTTDTETEYSTTEDELA. Over residues 71 to 87 the composition is skewed to acidic residues; sequence STTDTETEYSTTEDELA.

This is an uncharacterized protein from Autographa californica nuclear polyhedrosis virus (AcMNPV).